The sequence spans 288 residues: Ras-like protein 1 (288 aa).

11–18 serves as a coordination point for GTP; the sequence is GGGGVGKS. An Effector region motif is present at residues 33–41; it reads YDPTIEDSY. GTP-binding positions include 58-62 and 117-120; these read DTAGQ and NKCD. The segment at 176–288 is disordered; that stretch reads EKQQQQQQQQ…KSKNGCCVIV (113 aa). Composition is skewed to low complexity over residues 178 to 216 and 246 to 281; these read QQQQ…NNNN and PNQS…SKSK. A lipid anchor (S-palmitoyl cysteine) is attached at cysteine 284. Cysteine 285 bears the Cysteine methyl ester mark. Residue cysteine 285 is the site of S-farnesyl cysteine attachment. The propeptide at 286–288 is removed in mature form; the sequence is VIV.

This sequence belongs to the small GTPase superfamily. Ras family.

It localises to the cell membrane. It carries out the reaction GTP + H2O = GDP + phosphate + H(+). Alternates between an inactive form bound to GDP and an active form bound to GTP. Activated by a guanine nucleotide-exchange factor (GEF) and inactivated by a GTPase-activating protein (GAP). Its function is as follows. Required for the regulation of both a MAP kinase signaling pathway and a cAMP signaling pathway. The activation of these pathways contributes to the pathogenicity of the cells through the induction of the morphological transition from the yeast to the polarized filamentous form. The protein is Ras-like protein 1 (RAS1) of Candida albicans (strain WO-1) (Yeast).